The chain runs to 2367 residues: Probable G-protein coupled receptor 179 (2367 aa).

Residues 1–25 (MGTRGAVMPPPMWGLLGCCFVCAWA) form the signal peptide. Residues 26–381 (LGGPRPIRSL…CLVEEAAVLR (356 aa)) lie on the Extracellular side of the membrane. Positions 62-245 (YLYSGDAQQL…CQEGRLRPGW (184 aa)) are cache-like region. A glycan (N-linked (GlcNAc...) asparagine) is linked at N75. The cysteines at positions 76 and 236 are disulfide-linked. N298 is a glycosylation site (N-linked (GlcNAc...) asparagine). Residues 382-402 (AAVLACQACCMLAIFLSMLVS) form a helical membrane-spanning segment. Residues 403-415 (YRCRRNKRIWASG) are Cytoplasmic-facing. Residues 416 to 436 (VVLLETVLFGFLLLYFPVFIL) form a helical membrane-spanning segment. At 437 to 444 (YFKPSVFR) the chain is on the extracellular side. Residues 445 to 465 (CIALRWVRLLGFAIVYGTIIL) form a helical membrane-spanning segment. C445 and C537 are joined by a disulfide. Over 466 to 493 (KLYRVLQLFLSRTAQRSALLSSGRLLRR) the chain is Cytoplasmic. Residues 494 to 514 (LGLLLLPVLGFLAVWTVGALE) form a helical membrane-spanning segment. Residues 515 to 543 (RGIQHAPLVIRGHTPSGRHFYLCHHDRWD) lie on the Extracellular side of the membrane. The chain crosses the membrane as a helical span at residues 544 to 564 (YIMVVAELLLLCWGSFLCYAT). Over 565–575 (RAVLSAFHEPR) the chain is Cytoplasmic. A helical transmembrane segment spans residues 576–594 (YMGIALHNELLLSAAFHTA). Residues 595-607 (RFVLVPSLHPDWT) are Extracellular-facing. Residues 608–628 (LLLFFFHTHSTVTTTLALIFI) traverse the membrane as a helical segment. Residues 629–2367 (PKFWKLGAPP…PPTVYPWDWE (1739 aa)) lie on the Cytoplasmic side of the membrane. Disordered stretches follow at residues 731 to 818 (ARQH…FRSA), 869 to 932 (REER…PHPP), 1039 to 1083 (KSRA…QQGS), 1098 to 1198 (RSTY…AGKT), 1247 to 1431 (EVTE…CPWE), 1537 to 1557 (PRES…SSKA), 1577 to 1672 (DLRP…ERPQ), 1723 to 1757 (AIRK…PTPE), 1823 to 1852 (SEGT…KGRL), 1886 to 2108 (AQAP…GSVE), 2133 to 2212 (WEAG…KEAG), and 2308 to 2367 (GVRE…WDWE). The segment covering 738-759 (SGSPGHGSLPGSSRRRLLSSSL) has biased composition (low complexity). A compositionally biased stretch (basic and acidic residues) spans 773–782 (STYDQRREQD). Basic and acidic residues predominate over residues 1039-1067 (KSRAGENEMDAEDAHHQREANDVDEDRPK). Over residues 1153-1164 (LQNQQNAHTSRM) the composition is skewed to polar residues. 4 stretches are compositionally biased toward basic and acidic residues: residues 1171-1181 (EGSREQEDRGR), 1277-1299 (RALR…KSEP), 1341-1362 (GRIR…EKPG), and 1390-1407 (EDGK…QEKQ). Positions 1615–1639 (ESQKDKEKMPGKSEIEDVTAWEKPE) are enriched in basic and acidic residues. 6 stretches are compositionally biased toward basic and acidic residues: residues 1840–1851 (AEQREKALEKGR), 1903–1920 (AEGH…RQDP), 1970–1979 (SHLDRQRPDQ), 2023–2054 (VTER…KSEP), 2061–2070 (KKPEMADFRQ), and 2165–2180 (TEEH…REQE). The segment covering 2326-2340 (PEPSLQEAESQSSSL) has biased composition (low complexity).

Belongs to the G-protein coupled receptor 3 family. As to quaternary structure, homodimer. Associates with the R7 group RGS-GNB5 complexes, composed of an R7 group RGS subunit (RGS6, RGS7, RGS9 or RGS11) and GNB5, promoting their localization to the cell membrane and regulating the GTPase activator activity of R7 RGS proteins. Interacts with TRPM1. Interacts with GRM6. Interacts with EGFLAM; transsynaptic interaction is required for synaptic organization of photoreceptor cells. Expressed in the retina.

The protein localises to the cell membrane. It localises to the postsynaptic cell membrane. Its subcellular location is the cell projection. The protein resides in the dendrite. Orphan receptor involved in vision. Required for signal transduction through retinal depolarizing bipolar cells. Acts as an atypical G-protein coupled receptor that recruits and regulates the R7 group RGS-GNB5 complexes instead of activating G proteins: promotes the GTPase activator activity of R7 RGS proteins, increasing the GTPase activity of G protein alpha subunits, thereby driving them into their inactive GDP-bound form. Associates with components of metabotropic signaling cascade in retina ON-bipolar neurons, such as TRPM1 and GRM6: may control the ability of the GRM6 cascade to gate TRPM1. The chain is Probable G-protein coupled receptor 179 from Homo sapiens (Human).